A 371-amino-acid polypeptide reads, in one-letter code: tRNA-specific 2-thiouridylase MnmA (371 aa).

ATP-binding positions include 22–29 (GLSGGVDS) and methionine 48. The segment at 108 to 110 (NPD) is interaction with target base in tRNA. Catalysis depends on cysteine 113, which acts as the Nucleophile. Cysteine 113 and cysteine 209 are joined by a disulfide. Glycine 137 is an ATP binding site. The interaction with tRNA stretch occupies residues 159-161 (KDQ). Cysteine 209 (cysteine persulfide intermediate) is an active-site residue.

It belongs to the MnmA/TRMU family.

It is found in the cytoplasm. The enzyme catalyses S-sulfanyl-L-cysteinyl-[protein] + uridine(34) in tRNA + AH2 + ATP = 2-thiouridine(34) in tRNA + L-cysteinyl-[protein] + A + AMP + diphosphate + H(+). Functionally, catalyzes the 2-thiolation of uridine at the wobble position (U34) of tRNA, leading to the formation of s(2)U34. This Coxiella burnetii (strain CbuG_Q212) (Coxiella burnetii (strain Q212)) protein is tRNA-specific 2-thiouridylase MnmA.